A 502-amino-acid chain; its full sequence is Protein GIS3 (502 aa).

It is found in the cytoplasm. It localises to the nucleus. The sequence is that of Protein GIS3 (GIS3) from Saccharomyces cerevisiae (strain ATCC 204508 / S288c) (Baker's yeast).